The following is a 33-amino-acid chain: Kappa-theraphotoxin-Pg2a (33 aa).

Intrachain disulfides connect cysteine 2–cysteine 16, cysteine 9–cysteine 21, and cysteine 15–cysteine 28.

In terms of tissue distribution, expressed by the venom gland.

The protein resides in the secreted. In terms of biological role, gating modifier of Kv2.1/KCNB1 channels. The sequence is that of Kappa-theraphotoxin-Pg2a from Chilobrachys guangxiensis (Chinese earth tiger tarantula).